Reading from the N-terminus, the 748-residue chain is Adenosylcobalamin-dependent ribonucleoside-triphosphate reductase (748 aa).

Cys123 and Cys426 are joined by a disulfide. Residues 151–162 form an effector region-1 region; sequence SMPYSFMFDELM. The tract at residues 172 to 320 is effector region-2; it reads TKDNIAKLPP…IGNLIGKTVV (149 aa). Catalysis depends on residues Cys415 and Glu417. Positions 572–633 are adenosylcobalamin-binding-1; it reads FHYAGYLIQR…DPAFASAGTV (62 aa). The tract at residues 692-733 is adenosylcobalamin-binding-2; sequence FKQAPKEPIDVKTYKQKCAAIHGSVAAVFAVQNADHDQKDLE.

The protein belongs to the class II ribonucleoside-triphosphate reductase family. Monomer. Adenosylcob(III)alamin serves as cofactor.

The enzyme catalyses a 2'-deoxyribonucleoside 5'-triphosphate + [thioredoxin]-disulfide + H2O = a ribonucleoside 5'-triphosphate + [thioredoxin]-dithiol. Its activity is regulated as follows. Allosterically regulated by ATP and dNTP. In Lacticaseibacillus paracasei (strain ATCC 334 / BCRC 17002 / CCUG 31169 / CIP 107868 / KCTC 3260 / NRRL B-441) (Lactobacillus paracasei), this protein is Adenosylcobalamin-dependent ribonucleoside-triphosphate reductase (rtpR).